Here is a 504-residue protein sequence, read N- to C-terminus: DNA-binding protein reb1 (504 aa).

Positions 30–51 are disordered; it reads DFDDFPLNKGLKTNNNDYSGSI. HTH myb-type domains are found at residues 308–361 and 362–422; these read NPFE…RFGD and KLKR…KAAS. 2 consecutive DNA-binding regions (H-T-H motif) follow at residues 335 to 357 and 395 to 418; these read WTKI…RDVV and WTLV…QQLT.

The protein resides in the nucleus. Functionally, DNA-binding protein that recognizes sites within both the enhancer and the promoter of rRNA transcription, as well as upstream of many genes transcribed by RNA polymerase II. Has a role in the termination of RNA polymerase I catalyzed transcription. The sequence is that of DNA-binding protein reb1 (reb1) from Schizosaccharomyces pombe (strain 972 / ATCC 24843) (Fission yeast).